Consider the following 304-residue polypeptide: Acetyl-coenzyme A carboxylase carboxyl transferase subunit beta (304 aa).

The CoA carboxyltransferase N-terminal domain occupies 23-292 (VWTKCDSCGQ…PNPEAPREGV (270 aa)). Zn(2+) contacts are provided by Cys27, Cys30, Cys46, and Cys49. Residues 27–49 (CDSCGQVLYRAELERNLEVCPKC) form a C4-type zinc finger. Positions 284–304 (NPEAPREGVVVPPVPDQEPEA) are disordered. Pro residues predominate over residues 295–304 (PPVPDQEPEA).

It belongs to the AccD/PCCB family. In terms of assembly, acetyl-CoA carboxylase is a heterohexamer composed of biotin carboxyl carrier protein (AccB), biotin carboxylase (AccC) and two subunits each of ACCase subunit alpha (AccA) and ACCase subunit beta (AccD). Requires Zn(2+) as cofactor.

The protein resides in the cytoplasm. The catalysed reaction is N(6)-carboxybiotinyl-L-lysyl-[protein] + acetyl-CoA = N(6)-biotinyl-L-lysyl-[protein] + malonyl-CoA. Its pathway is lipid metabolism; malonyl-CoA biosynthesis; malonyl-CoA from acetyl-CoA: step 1/1. In terms of biological role, component of the acetyl coenzyme A carboxylase (ACC) complex. Biotin carboxylase (BC) catalyzes the carboxylation of biotin on its carrier protein (BCCP) and then the CO(2) group is transferred by the transcarboxylase to acetyl-CoA to form malonyl-CoA. This is Acetyl-coenzyme A carboxylase carboxyl transferase subunit beta from Shigella flexneri.